Reading from the N-terminus, the 466-residue chain is Muscarinic acetylcholine receptor M2 (466 aa).

Residues 1–22 (MNNSTNSSNNGLAITSPYKTFE) lie on the Extracellular side of the membrane. Asn2, Asn3, and Asn6 each carry an N-linked (GlcNAc...) asparagine glycan. The chain crosses the membrane as a helical span at residues 23–45 (VVFIVLVAGSLSLVTIIGNILVM). Residues 46–59 (VSIKVNRHLQTVNN) are Cytoplasmic-facing. Residues 60-80 (YFLFSLACADLIIGVFSMNLY) form a helical membrane-spanning segment. Residues 81-97 (TLYTVIGYWPLGPVVCD) lie on the Extracellular side of the membrane. An intrachain disulfide couples Cys96 to Cys176. The chain crosses the membrane as a helical span at residues 98-119 (LWLALDYVVSNASVMNLLIISF). The Important for signaling motif lies at 120–122 (DRY). Topologically, residues 120 to 139 (DRYFCVTKPLTYPVKRTTKM) are cytoplasmic. The helical transmembrane segment at 140–162 (AGMMIAAAWVLSFILWAPAILFW) threads the bilayer. Topologically, residues 163 to 184 (QFIVGVRTVEDGECYIQFFSNA) are extracellular. A helical membrane pass occupies residues 185–209 (AVTFGTAIAAFYLPVIIMTVLYWHI). Over 210–387 (SRASKSRIKK…PPSREKKVTR (178 aa)) the chain is Cytoplasmic. The disordered stretch occupies residues 218–320 (KKEKKEPVAN…SLGHSKDDNS (103 aa)). The residue at position 232 (Ser232) is a Phosphoserine. Positions 254–270 (GLEHNKIQNGKAPRDGG) are enriched in basic and acidic residues. 2 stretches are compositionally biased toward polar residues: residues 284-293 (NDSTSVSAVA) and 304-313 (DENTVSTSLG). Residues 388–410 (TILAILLAFIITWAPYNVMVLIN) traverse the membrane as a helical segment. Residues 411 to 418 (TFCAPCIP) lie on the Extracellular side of the membrane. A disulfide bridge links Cys413 with Cys416. The helical transmembrane segment at 419–442 (NTVWTIGYWLCYINSTINPACYAL) threads the bilayer. An Important for signaling motif is present at residues 436-440 (NPACY). The Cytoplasmic segment spans residues 443–466 (CNATFKKTFKHLLMCHYKNIGATR). Phosphothreonine is present on residues Thr446, Thr450, and Thr465.

Belongs to the G-protein coupled receptor 1 family. Muscarinic acetylcholine receptor subfamily. CHRM2 sub-subfamily. As to quaternary structure, interacts with ARRB1 and ARRB2. Interacts with RACK1; the interaction regulates CHRM2 internalization. Phosphorylated in response to agonist treatment.

The protein localises to the cell membrane. It is found in the postsynaptic cell membrane. Functionally, the muscarinic acetylcholine receptor mediates various cellular responses, including inhibition of adenylate cyclase, breakdown of phosphoinositides and modulation of potassium channels through the action of G proteins. Primary transducing effect is adenylate cyclase inhibition. Signaling promotes phospholipase C activity, leading to the release of inositol trisphosphate (IP3); this then triggers calcium ion release into the cytosol. The protein is Muscarinic acetylcholine receptor M2 (Chrm2) of Mus musculus (Mouse).